The following is a 103-amino-acid chain: Cytochrome c55X (103 aa).

A signal peptide spans Met-1 to Ala-17. The heme c site is built by Cys-36, Cys-39, and His-40.

In terms of processing, binds 1 heme c group covalently per subunit.

It is found in the periplasm. Monoheme c-type cytochrome. This chain is Cytochrome c55X (nirC), found in Paracoccus denitrificans (strain Pd 1222).